Here is a 247-residue protein sequence, read N- to C-terminus: DNA polymerase sliding clamp (247 aa).

It belongs to the PCNA family. In terms of assembly, homotrimer. The subunits circularize to form a toroid; DNA passes through its center. Replication factor C (RFC) is required to load the toroid on the DNA.

Its function is as follows. Sliding clamp subunit that acts as a moving platform for DNA processing. Responsible for tethering the catalytic subunit of DNA polymerase and other proteins to DNA during high-speed replication. This Methanoregula boonei (strain DSM 21154 / JCM 14090 / 6A8) protein is DNA polymerase sliding clamp.